A 457-amino-acid polypeptide reads, in one-letter code: RuvB-like helicase 1 (457 aa).

Position 73-80 (73-80 (GGPSTGKT)) interacts with ATP.

This sequence belongs to the RuvB family. As to quaternary structure, may form heterododecamers with RVB2. Component of the SWR1 chromatin remodeling complex, the INO80 chromatin remodeling complex, and of the R2TP complex.

The protein resides in the nucleus. It carries out the reaction ATP + H2O = ADP + phosphate + H(+). In terms of biological role, DNA helicase which participates in several chromatin remodeling complexes, including the SWR1 and the INO80 complexes. The SWR1 complex mediates the ATP-dependent exchange of histone H2A for the H2A variant HZT1 leading to transcriptional regulation of selected genes by chromatin remodeling. The INO80 complex remodels chromatin by shifting nucleosomes and is involved in DNA repair. Also involved in pre-rRNA processing. The polypeptide is RuvB-like helicase 1 (RVB1) (Candida glabrata (strain ATCC 2001 / BCRC 20586 / JCM 3761 / NBRC 0622 / NRRL Y-65 / CBS 138) (Yeast)).